Reading from the N-terminus, the 494-residue chain is Cobyric acid synthase (494 aa).

Residues 248-444 enclose the GATase cobBQ-type domain; that stretch reads EIEIAIIKLP…LHGIFENDEW (197 aa). C329 serves as the catalytic Nucleophile. The active site involves H436.

This sequence belongs to the CobB/CobQ family. CobQ subfamily.

The protein operates within cofactor biosynthesis; adenosylcobalamin biosynthesis. Catalyzes amidations at positions B, D, E, and G on adenosylcobyrinic A,C-diamide. NH(2) groups are provided by glutamine, and one molecule of ATP is hydrogenolyzed for each amidation. The chain is Cobyric acid synthase from Prochlorococcus marinus (strain NATL1A).